Here is a 555-residue protein sequence, read N- to C-terminus: MFS-type transporter VdtG (555 aa).

Residues 1 to 20 form a disordered region; that stretch reads MNGNGTADKPGPPGGKPFGP. Asn-4 carries N-linked (GlcNAc...) asparagine glycosylation. 3 helical membrane passes run 30-50, 71-91, and 101-121; these read TGFKLYSIMTGLYLASFLTAL, DIGWYGSAYLLTFCAFQLLFG, and WVFLSAVLIFEIGSAICGAAP. N-linked (GlcNAc...) asparagine glycosylation is present at Asn-122. 2 helical membrane passes run 132 to 152 and 162 to 182; these read IAGLGSSGIFGGSVIITFFTV and GIAGVIFALASSVGPLIGGGF. N-linked (GlcNAc...) asparagine glycosylation is present at Asn-185. Helical transmembrane passes span 190 to 210, 232 to 252, 262 to 282, and 304 to 324; these read WCFYINLPVGALTVVTILLFL, LGNLCLIPGIICLLLAIQWGG, IVALLVLAGVLLIAFVGVQLW, and AFTICVTAGFMSFNYYLPIWF. A glycan (N-linked (GlcNAc...) asparagine) is linked at Asn-329. A run of 5 helical transmembrane segments spans residues 337 to 357, 364 to 384, 393 to 413, 425 to 445, and 497 to 517; these read VMMLPTVISSGVASLACGFII, TPFMIGGSVLMAIGAGLLTTF, WIGYQVLWALGCGMSMQQASL, PIGISLIFFSQSLGGSVFLAV, and LMDVFRVAVASSCACVVAAAF. A disordered region spans residues 528–555; sequence AAGPGGPGGPGGPGGPGGPEGLRGGNKV. The segment covering 530–555 has biased composition (gly residues); that stretch reads GPGGPGGPGGPGGPGGPEGLRGGNKV.

The protein belongs to the major facilitator superfamily. TCR/Tet family.

Its subcellular location is the endoplasmic reticulum membrane. MFS-type transporter; part of the gene cluster that mediates the biosynthesis of viriditoxin, one of the 'classical' secondary metabolites produced by fungi and that has antibacterial activity. Is not essential for viriditoxin production. This chain is MFS-type transporter VdtG, found in Byssochlamys spectabilis (Paecilomyces variotii).